A 585-amino-acid chain; its full sequence is Arginine--tRNA ligase (585 aa).

A 'HIGH' region motif is present at residues 131–141 (ANPTGPMHVGH).

Belongs to the class-I aminoacyl-tRNA synthetase family. As to quaternary structure, monomer.

The protein resides in the cytoplasm. It carries out the reaction tRNA(Arg) + L-arginine + ATP = L-arginyl-tRNA(Arg) + AMP + diphosphate. This Brucella anthropi (strain ATCC 49188 / DSM 6882 / CCUG 24695 / JCM 21032 / LMG 3331 / NBRC 15819 / NCTC 12168 / Alc 37) (Ochrobactrum anthropi) protein is Arginine--tRNA ligase.